A 258-amino-acid polypeptide reads, in one-letter code: Trypsin eta (258 aa).

An N-terminal signal peptide occupies residues 1 to 22 (MNKVILRILALLFLLGIGAVSA). A propeptide spans 23 to 27 (QPDGR) (activation peptide). Positions 28-258 (IVGGADTTNY…YFKDWIASRV (231 aa)) constitute a Peptidase S1 domain. Cysteine 59 and cysteine 75 are oxidised to a cystine. Residues histidine 74 and aspartate 120 each act as charge relay system in the active site. 2 disulfide bridges follow: cysteine 185-cysteine 200 and cysteine 211-cysteine 235. Residue serine 215 is the Charge relay system of the active site.

It belongs to the peptidase S1 family.

It is found in the secreted. It localises to the extracellular space. The enzyme catalyses Preferential cleavage: Arg-|-Xaa, Lys-|-Xaa.. The chain is Trypsin eta (etaTry) from Drosophila erecta (Fruit fly).